Here is a 161-residue protein sequence, read N- to C-terminus: Peroxynitrite isomerase 1 (161 aa).

The GXWXGXG signature appears at 17–23 (GTWTGRG). His152 contributes to the heme b binding site.

The protein belongs to the nitrobindin family. As to quaternary structure, homodimer. Heme b serves as cofactor.

It catalyses the reaction peroxynitrite = nitrate. It functions in the pathway nitrogen metabolism. Functionally, heme-binding protein able to scavenge peroxynitrite and to protect free L-tyrosine against peroxynitrite-mediated nitration, by acting as a peroxynitrite isomerase that converts peroxynitrite to nitrate. Therefore, this protein likely plays a role in peroxynitrite sensing and in the detoxification of reactive nitrogen and oxygen species (RNS and ROS, respectively). Is able to bind nitric oxide (NO) in vitro, but may act as a sensor of peroxynitrite levels in vivo. This is Peroxynitrite isomerase 1 from Mycolicibacterium paratuberculosis (strain ATCC BAA-968 / K-10) (Mycobacterium paratuberculosis).